The chain runs to 329 residues: DNA-directed RNA polymerase subunit alpha (329 aa).

An alpha N-terminal domain (alpha-NTD) region spans residues 1-235; sequence MVREKVKVST…DLFIPFLHTE (235 aa). Residues 269–329 are alpha C-terminal domain (alpha-CTD); the sequence is IALKYIFIDQ…KQILGILEKK (61 aa).

Belongs to the RNA polymerase alpha chain family. In terms of assembly, in plastids the minimal PEP RNA polymerase catalytic core is composed of four subunits: alpha, beta, beta', and beta''. When a (nuclear-encoded) sigma factor is associated with the core the holoenzyme is formed, which can initiate transcription.

The protein resides in the plastid. The protein localises to the chloroplast. It carries out the reaction RNA(n) + a ribonucleoside 5'-triphosphate = RNA(n+1) + diphosphate. DNA-dependent RNA polymerase catalyzes the transcription of DNA into RNA using the four ribonucleoside triphosphates as substrates. The polypeptide is DNA-directed RNA polymerase subunit alpha (Gossypium hirsutum (Upland cotton)).